The sequence spans 251 residues: Probable transcriptional regulatory protein Amuc_0709 (251 aa).

It belongs to the TACO1 family.

Its subcellular location is the cytoplasm. The protein is Probable transcriptional regulatory protein Amuc_0709 of Akkermansia muciniphila (strain ATCC BAA-835 / DSM 22959 / JCM 33894 / BCRC 81048 / CCUG 64013 / CIP 107961 / Muc).